The sequence spans 323 residues: Beta-ketoacyl-[acyl-carrier-protein] synthase III (323 aa).

Residues Cys-114 and His-250 contribute to the active site. Positions 251–255 are ACP-binding; it reads QANLR. The active site involves Asn-280.

It belongs to the thiolase-like superfamily. FabH family. Homodimer.

It is found in the cytoplasm. It catalyses the reaction malonyl-[ACP] + acetyl-CoA + H(+) = 3-oxobutanoyl-[ACP] + CO2 + CoA. It participates in lipid metabolism; fatty acid biosynthesis. In terms of biological role, catalyzes the condensation reaction of fatty acid synthesis by the addition to an acyl acceptor of two carbons from malonyl-ACP. Catalyzes the first condensation reaction which initiates fatty acid synthesis and may therefore play a role in governing the total rate of fatty acid production. Possesses both acetoacetyl-ACP synthase and acetyl transacylase activities. Its substrate specificity determines the biosynthesis of branched-chain and/or straight-chain of fatty acids. In Cereibacter sphaeroides (strain ATCC 17023 / DSM 158 / JCM 6121 / CCUG 31486 / LMG 2827 / NBRC 12203 / NCIMB 8253 / ATH 2.4.1.) (Rhodobacter sphaeroides), this protein is Beta-ketoacyl-[acyl-carrier-protein] synthase III.